The chain runs to 525 residues: Putative ribose/galactose/methyl galactoside import ATP-binding protein (525 aa).

The segment covering 1 to 15 (MFGSATANPPAQRNL) has biased composition (polar residues). Residues 1–23 (MFGSATANPPAQRNLPSGDGDGG) are disordered. 2 consecutive ABC transporter domains span residues 33 to 269 (LEIS…VGRE) and 279 to 523 (KPAG…SGHK). Residue 65–72 (GENGAGKS) participates in ATP binding.

Belongs to the ABC transporter superfamily. Carbohydrate importer 2 (CUT2) (TC 3.A.1.2) family.

The protein localises to the cell inner membrane. The catalysed reaction is D-ribose(out) + ATP + H2O = D-ribose(in) + ADP + phosphate + H(+). The enzyme catalyses D-galactose(out) + ATP + H2O = D-galactose(in) + ADP + phosphate + H(+). Its function is as follows. Part of an ABC transporter complex involved in carbohydrate import. Could be involved in ribose, galactose and/or methyl galactoside import. Responsible for energy coupling to the transport system. The chain is Putative ribose/galactose/methyl galactoside import ATP-binding protein from Pseudomonas syringae pv. syringae (strain B728a).